Reading from the N-terminus, the 626-residue chain is Polypeptide N-acetylgalactosaminyltransferase 5 (626 aa).

At 1-11 (MIIFKKKAILK) the chain is on the cytoplasmic side. The chain crosses the membrane as a helical; Signal-anchor for type II membrane protein span at residues 12 to 31 (VLLLVPVFWICSLIFFAATS). The N-linked (GlcNAc...) asparagine glycan is linked to Asn-32. The Lumenal portion of the chain corresponds to 32–626 (NDSSQIGSNN…AIEHGAKPPS (595 aa)). Disulfide bonds link Cys-165-Cys-399, Cys-390-Cys-466, Cys-502-Cys-521, Cys-544-Cys-557, and Cys-583-Cys-598. A catalytic subdomain A region spans residues 174–284 (LPRTSVIICF…EGWMEPLLDR (111 aa)). 2 residues coordinate substrate: Asp-215 and Arg-245. Asp-268 contributes to the Mn(2+) binding site. Ser-269 is a substrate binding site. A Mn(2+)-binding site is contributed by His-270. An N-linked (GlcNAc...) asparagine glycan is attached at Asn-338. The catalytic subdomain B stretch occupies residues 345-407 (PVRSPTMAGG…PCSHVGHVFR (63 aa)). Trp-376 provides a ligand contact to substrate. His-404 is a binding site for Mn(2+). Residues Arg-407 and Tyr-412 each contribute to the substrate site. Positions 488–610 (AKGEVRNSAV…DDPYQHWKFK (123 aa)) constitute a Ricin B-type lectin domain.

The protein belongs to the glycosyltransferase 2 family. GalNAc-T subfamily. Requires Mn(2+) as cofactor.

The protein localises to the golgi apparatus membrane. The catalysed reaction is L-seryl-[protein] + UDP-N-acetyl-alpha-D-galactosamine = a 3-O-[N-acetyl-alpha-D-galactosaminyl]-L-seryl-[protein] + UDP + H(+). It carries out the reaction L-threonyl-[protein] + UDP-N-acetyl-alpha-D-galactosamine = a 3-O-[N-acetyl-alpha-D-galactosaminyl]-L-threonyl-[protein] + UDP + H(+). It functions in the pathway protein modification; protein glycosylation. Functionally, catalyzes the initial reaction in O-linked oligosaccharide biosynthesis, the transfer of an N-acetyl-D-galactosamine residue to a serine or threonine residue on the protein receptor. In Caenorhabditis elegans, this protein is Polypeptide N-acetylgalactosaminyltransferase 5 (gly-5).